The following is a 54-amino-acid chain: Large ribosomal subunit protein bL33A (54 aa).

It belongs to the bacterial ribosomal protein bL33 family.

This chain is Large ribosomal subunit protein bL33A, found in Streptomyces griseus subsp. griseus (strain JCM 4626 / CBS 651.72 / NBRC 13350 / KCC S-0626 / ISP 5235).